The primary structure comprises 250 residues: Ribonuclease PH (250 aa).

Residues Arg86 and 124-126 (GTR) contribute to the phosphate site.

The protein belongs to the RNase PH family. Homohexameric ring arranged as a trimer of dimers.

The catalysed reaction is tRNA(n+1) + phosphate = tRNA(n) + a ribonucleoside 5'-diphosphate. Functionally, phosphorolytic 3'-5' exoribonuclease that plays an important role in tRNA 3'-end maturation. Removes nucleotide residues following the 3'-CCA terminus of tRNAs; can also add nucleotides to the ends of RNA molecules by using nucleoside diphosphates as substrates, but this may not be physiologically important. Probably plays a role in initiation of 16S rRNA degradation (leading to ribosome degradation) during starvation. The chain is Ribonuclease PH from Exiguobacterium sibiricum (strain DSM 17290 / CCUG 55495 / CIP 109462 / JCM 13490 / 255-15).